The chain runs to 301 residues: tRNA dimethylallyltransferase (301 aa).

ATP is bound at residue 8–15 (GATGTGKS). Residue 10–15 (TGTGKS) participates in substrate binding. The tract at residues 33–36 (DSMQ) is interaction with substrate tRNA.

It belongs to the IPP transferase family. In terms of assembly, monomer. Mg(2+) is required as a cofactor.

The catalysed reaction is adenosine(37) in tRNA + dimethylallyl diphosphate = N(6)-dimethylallyladenosine(37) in tRNA + diphosphate. In terms of biological role, catalyzes the transfer of a dimethylallyl group onto the adenine at position 37 in tRNAs that read codons beginning with uridine, leading to the formation of N6-(dimethylallyl)adenosine (i(6)A). This Tropheryma whipplei (strain Twist) (Whipple's bacillus) protein is tRNA dimethylallyltransferase.